The following is a 497-amino-acid chain: Meiosis-specific serine/threonine-protein kinase MEK1 (497 aa).

Residues V47–L102 form the FHA domain. The Protein kinase domain maps to E162–I444. ATP is bound by residues V168 to V176 and K199. Catalysis depends on D290, which acts as the Proton acceptor.

It belongs to the protein kinase superfamily. CAMK Ser/Thr protein kinase family. CHEK2 subfamily.

The catalysed reaction is L-seryl-[protein] + ATP = O-phospho-L-seryl-[protein] + ADP + H(+). It carries out the reaction L-threonyl-[protein] + ATP = O-phospho-L-threonyl-[protein] + ADP + H(+). Functionally, probable protein kinase required for meiotic recombination. The protein is Meiosis-specific serine/threonine-protein kinase MEK1 (MEK1) of Saccharomyces cerevisiae (strain ATCC 204508 / S288c) (Baker's yeast).